Reading from the N-terminus, the 309-residue chain is Olfactory receptor 5B2 (309 aa).

The Extracellular segment spans residues 1 to 23 (MENCTEVTKFILLGLTSVPELQI). Residue asparagine 3 is glycosylated (N-linked (GlcNAc...) asparagine). A helical membrane pass occupies residues 24–47 (PLFILFTFIYLLTLCGNLGMMLLI). Residues 48–55 (LMDSCLHT) are Cytoplasmic-facing. A helical membrane pass occupies residues 56–77 (PMYFFLSNLSLVDFGYSSAVTP). The Extracellular portion of the chain corresponds to 78 to 98 (KVMAGFLRGDKVISYNACAVQ). Cysteines 95 and 187 form a disulfide. A helical membrane pass occupies residues 99 to 118 (MFFFVALATVENYLLASMAY). Residues 119–137 (DRYAAVCKPLHYTTTMTAS) are Cytoplasmic-facing. The helical transmembrane segment at 138-156 (VGACLALGSYVCGFLNASF) threads the bilayer. Residues 157–193 (HIGGIFSLSFCKSNLVHHFFCDVPAVMALSCSDKHTS) lie on the Extracellular side of the membrane. A helical membrane pass occupies residues 194–217 (EVILVFMSSFNIFFVLLVIFISYL). The Cytoplasmic segment spans residues 218–234 (FIFITILKMHSAKGHQK). Residues 235–257 (ALSTCASHFTAVSVFYGTVIFIY) form a helical membrane-spanning segment. At 258–270 (LQPSSSHSMDTDK) the chain is on the extracellular side. Residues 271–290 (MASVFYAMIIPMLNPVVYSL) form a helical membrane-spanning segment. The Cytoplasmic portion of the chain corresponds to 291-309 (RNREVQNAFKKVLRRQKFL).

Belongs to the G-protein coupled receptor 1 family.

It localises to the cell membrane. Functionally, odorant receptor. This chain is Olfactory receptor 5B2 (OR5B2), found in Homo sapiens (Human).